The sequence spans 398 residues: ATP-dependent RNA helicase RhlB (398 aa).

Positions 9-37 (TRFHDFKLSNELMHAIHDLGFPYCTPIQA) match the Q motif motif. Residues 40–220 (LGYTLRGQDA…KQWTTNPAIV (181 aa)) enclose the Helicase ATP-binding domain. 53–60 (AQTGTGKT) provides a ligand contact to ATP. The short motif at 166–169 (DEAD) is the DEAD box element. In terms of domain architecture, Helicase C-terminal spans 243–393 (DKYKLLYNLV…MPPDELLKPV (151 aa)).

It belongs to the DEAD box helicase family. RhlB subfamily. As to quaternary structure, component of the RNA degradosome, which is a multiprotein complex involved in RNA processing and mRNA degradation.

It is found in the cytoplasm. It catalyses the reaction ATP + H2O = ADP + phosphate + H(+). Functionally, DEAD-box RNA helicase involved in RNA degradation. Has RNA-dependent ATPase activity and unwinds double-stranded RNA. The protein is ATP-dependent RNA helicase RhlB of Pseudomonas putida (strain ATCC 47054 / DSM 6125 / CFBP 8728 / NCIMB 11950 / KT2440).